The chain runs to 712 residues: MSSKNLLVELFVEELPPKALKKLGEAFSAALANSLKNAGLAPATASITAYASPRRLAAHVTDVAAVAADKPVAQKLMPVAVGLDAAGNATPALLKKLAGLGIDADAAASVVASLRRENDGKADVLFFDSLAKGATLAEGLQKAIEAALAALPIPKVMTYQLQDGWSSVNFVRPAHGLVALHGGDVVPVAVLGLNAGRETHGHRFEATVDPVVFANADEYASKLATDGAVIASFAERRAEIARQLEGAAAKAGQATGAALRPIDDEALLDEVTALVERPNVLIGQFEQEFLAVPQECLILTMKANQKYFPLLDATGKLTNKFLVVSNISPEDASAVIGGNERVVRPRLADAKFFFDQDRKKSLESRVIGLSKVVYHNKLGTQGERMQRVAAIARAIGESLGGEALALHAEQAAVLAKADLLTDMVGEFPELQGTMGRYYALHDGLAAEIADAVEDHYKPRFAGDTLPRGIVGTVVALADKLETLVGMFGIGQIPTGDRDPFALRRHALGVIRMLAENNLALPLDHLLQTAAAPFASVDGFKAAEAPLADFIYDRLAGSLREQGYTAQEVDAVVSQRPQRLGDIPKRLAAVRAFSGLPESAALAAANKRVGNILKKVENAVEAVVDNALLKEAAEIALHDALVEVVPQADAAFVTGDYSESLQALAALRAPVDAFFDDVMVNAEDPALRANRLGLLAKLHAAMNQVADISKLSA.

Belongs to the class-II aminoacyl-tRNA synthetase family. In terms of assembly, tetramer of two alpha and two beta subunits.

The protein resides in the cytoplasm. It catalyses the reaction tRNA(Gly) + glycine + ATP = glycyl-tRNA(Gly) + AMP + diphosphate. The polypeptide is Glycine--tRNA ligase beta subunit (Dechloromonas aromatica (strain RCB)).